The primary structure comprises 58 residues: Preprotein translocase subunit SecG (58 aa).

At 1–32 (MAQKKKSSGSGLMSSAGLMTYYDADKKAIHVQ) the chain is on the cytoplasmic side. A helical transmembrane segment spans residues 33-54 (PKTVFIFGAICGIVILAFSAGF). The Extracellular portion of the chain corresponds to 55–58 (GLWP).

This sequence belongs to the SEC61-beta family. In terms of assembly, component of the protein translocase complex. Heterotrimer consisting of alpha (SecY), beta (SecG) and gamma (SecE) subunits. Can form oligomers of the heterotrimer.

It is found in the cell membrane. Functionally, involved in protein export. The function of the beta subunit is unknown, but it may be involved in stabilization of the trimeric complex. The chain is Preprotein translocase subunit SecG from Methanococcoides burtonii (strain DSM 6242 / NBRC 107633 / OCM 468 / ACE-M).